The primary structure comprises 262 residues: MNKIHVTYKNLLLPITFIAATLISACDNDKDAMAEAEKNQEKYMQKIQQKEHQQSMFFYDKAEMQKAIANINAKGGANLAIIEVRFFKGGYSFIRQSVNTPAKVEVFKFNNGYWGGPSPVNLTIFGTITEEQKQEALKEALFKFDSINFSIIPERIQETIKRANASGIISVTEDSDIVVRAEIAHNGEFVYDITITAKNTARAVMTLNKDGSIAGYEIKEPFDPKKEAEKAQQLVEQSRKDIESQRKKAAGKMNEIQQTFKK.

The signal sequence occupies residues 1 to 25 (MNKIHVTYKNLLLPITFIAATLISA). Cys-26 carries the N-palmitoyl cysteine lipid modification. The S-diacylglycerol cysteine moiety is linked to residue Cys-26. The interval 227–262 (EAEKAQQLVEQSRKDIESQRKKAAGKMNEIQQTFKK) is disordered. The segment covering 237 to 246 (QSRKDIESQR) has biased composition (basic and acidic residues).

It localises to the cell membrane. The protein is Probable lipoprotein EnvF (envF) of Salmonella typhimurium (strain LT2 / SGSC1412 / ATCC 700720).